Here is a 238-residue protein sequence, read N- to C-terminus: Snake venom metalloproteinase HF-1 (238 aa).

Positions 17–221 (RYIQLVVVAD…YNPQCILNKP (205 aa)) constitute a Peptidase M12B domain. D106 contacts Ca(2+). Intrachain disulfides connect C130/C216 and C174/C181. H158 contributes to the Zn(2+) binding site. E159 is a catalytic residue. Positions 162 and 168 each coordinate Zn(2+). Ca(2+) is bound by residues C216 and N219.

Monomer. Zn(2+) is required as a cofactor. In terms of tissue distribution, expressed by the venom gland.

It localises to the secreted. Inhibited by EDTA and EGTA. Inhibited by serum and antihemorrhagic factors Da2-I and Da2-II from D.albiventris. Not inhibited by PMSF or SBT-I. Functionally, snake venom zinc metalloprotease that is weakly hemorrhagic and has Aalpha, Bbeta fibrinogenolytic activities. Cleaves the Aalpha chain of fibrinogen first, followed by the Bbeta chain and shows no effect on the gamma chain. Has caseinolytic activity. Induces dose-dependent edema. The protein is Snake venom metalloproteinase HF-1 of Bothrops marajoensis (Marajo lancehead).